Here is a 278-residue protein sequence, read N- to C-terminus: Non-heme chloroperoxidase (278 aa).

Residues 26 to 264 (PVVLIHGFPL…GAPHGLLWTH (239 aa)) form the AB hydrolase-1 domain. Residues Ser-99, Asp-229, and His-258 contribute to the active site.

Belongs to the AB hydrolase superfamily. Bacterial non-heme haloperoxidase / perhydrolase family. As to quaternary structure, homodimer.

This Kitasatospora aureofaciens (Streptomyces aureofaciens) protein is Non-heme chloroperoxidase (cpo).